The primary structure comprises 775 residues: Probable ubiquitin carboxyl-terminal hydrolase creB (775 aa).

A disordered region spans residues 1 to 45 (MGSFLRSFRHNGGSTAPSVGAVPAKKEPQPPPMTPLEKRLLDMGP). Residues 36–45 (LEKRLLDMGP) show a composition bias toward basic and acidic residues. In terms of domain architecture, USP spans 55–468 (YGMENYGNTC…CAYVLFYQET (414 aa)). The active-site Nucleophile is the Cys-64. Disordered stretches follow at residues 113-146 (EAEAQAEKQKAANAQRPGMPPNPQQKPEDKDSPE) and 238-269 (ASKQPPIEKSLPAPETADSVDQSSSTGSKTPN). A compositionally biased stretch (polar residues) spans 256 to 269 (SVDQSSSTGSKTPN). His-419 (proton acceptor) is an active-site residue. Residues 496 to 775 (LKQNGFPQSP…LRKKSFSILS (280 aa)) form a disordered region. Low complexity-rich tracts occupy residues 546-566 (ESAPFSPLSPLSPLSPLSPLS) and 576-585 (ERVTTVATPP). The stretch at 586–653 (KNDALAKKER…ASKAEEDRRL (68 aa)) forms a coiled coil. Over residues 589–662 (ALAKKERARE…LSHENGKEKQ (74 aa)) the composition is skewed to basic and acidic residues. Over residues 668–679 (RLKRGSKSLSHR) the composition is skewed to basic residues. The span at 705 to 725 (SQTGPTSEQQQQQQQQQSPPN) shows a compositional bias: low complexity. Residues 739–757 (TIREDEQVNHKDSKHERTG) are compositionally biased toward basic and acidic residues. Residues 758-775 (HGKWRSFSLRKKSFSILS) are compositionally biased toward basic residues.

It belongs to the peptidase C19 family. In terms of assembly, interacts with creA, creC and qutD.

It catalyses the reaction Thiol-dependent hydrolysis of ester, thioester, amide, peptide and isopeptide bonds formed by the C-terminal Gly of ubiquitin (a 76-residue protein attached to proteins as an intracellular targeting signal).. Its function is as follows. Ubiquitin thioesterase component of the regulatory network controlling carbon source utilization through ubiquitination and deubiquitination involving creA, creB, creC, creD and acrB. Deubiquitinates the creA catabolic repressor and the quinate permease qutD. Also plays a role in response to carbon starvation and the control of extracellular proteases activity. In Aspergillus fumigatus (strain ATCC MYA-4609 / CBS 101355 / FGSC A1100 / Af293) (Neosartorya fumigata), this protein is Probable ubiquitin carboxyl-terminal hydrolase creB (creB).